Here is a 127-residue protein sequence, read N- to C-terminus: uncharacterized protein (127 aa).

Residues glycine 69–asparagine 94 are disordered.

This is an uncharacterized protein from Homo sapiens (Human).